Consider the following 502-residue polypeptide: MAPLKLNSRNLSQIAAAGGALVKIPTYQRGRAVKEGIVHIGVGGFHRAHLAVYIDQLMQKHGVNDYAICGVGLQPFDSAMRDALASQDHLYTLIERSAKGSFAHVIGSINSYLFAPDNREAVIAKMAHPDTKIVSLTITESGYYYNENTHELQSEHPDIQFDLDPANEKAPRTTFGFLYAGLTRRYQQGLKPFTVMSCDNMQKNGSITRHMLESFARLRNPEVAEWIAEEGAFPNAMVDRITPQTSETDKTALAEKFGIVDSWPVVTEPFTQWVIEDQFSDGRPPFEKVGVQVVKDVHAVEQFEKHKLRLLNGSHSALGYPGQLAGFQYVHEVMANPLFRKFVWQMMQEEVKPLLPEIPGVDIDEYCNTLIERFTNPTIMDQLPRICLNASGKIPQFIMPSIAEAIWETGPFRRLCFVAAAWFHYIKGVDDRGKPFEVVDPMREELQAKARAGGNDPSELLSIKSLFGDDLRNDERFLREITTAMNDIARDGIMKTLPKYIN.

Residue 37-48 coordinates NAD(+); the sequence is IVHIGVGGFHRA.

This sequence belongs to the mannitol dehydrogenase family. Monomer.

The catalysed reaction is D-mannitol + NAD(+) = D-fructose + NADH + H(+). In terms of biological role, catalyzes the NAD(H)-dependent interconversion of D-fructose and D-mannitol in the mannitol metabolic pathway. This is Mannitol 2-dehydrogenase from Aspergillus fumigatus (strain CBS 144.89 / FGSC A1163 / CEA10) (Neosartorya fumigata).